A 945-amino-acid polypeptide reads, in one-letter code: Oxysterol-binding protein homolog C23H4.01c (945 aa).

The GOLD domain maps to 1 to 131 (METVEIRSKS…PKTVTFLLTA (131 aa)). The region spanning 149-243 (KQIISGTLLK…WCNALEKAKN (95 aa)) is the PH domain. Serine 288, serine 419, and serine 421 each carry phosphoserine. Disordered regions lie at residues 396–555 (ESGA…LPHS) and 846–894 (LEKD…MEEK). Over residues 443 to 454 (TSSISDTSSNSS) the composition is skewed to low complexity. The span at 460–470 (LNATSLASTVD) shows a compositional bias: polar residues. A compositionally biased stretch (basic and acidic residues) spans 482–499 (ESNKENDIKRKQPFHDLM). A Phosphoserine modification is found at serine 503.

Belongs to the OSBP family.

It is found in the cytoplasm. The polypeptide is Oxysterol-binding protein homolog C23H4.01c (Schizosaccharomyces pombe (strain 972 / ATCC 24843) (Fission yeast)).